Reading from the N-terminus, the 382-residue chain is Mannitol-1-phosphate 5-dehydrogenase (382 aa).

NAD(+) is bound at residue 3–14; it reads ALHFGAGNIGRG. The residue at position 269 (lysine 269) is an N6-acetyllysine.

It belongs to the mannitol dehydrogenase family.

It carries out the reaction D-mannitol 1-phosphate + NAD(+) = beta-D-fructose 6-phosphate + NADH + H(+). In Escherichia coli O139:H28 (strain E24377A / ETEC), this protein is Mannitol-1-phosphate 5-dehydrogenase.